The following is a 258-amino-acid chain: Snake venom serine protease 3 (258 aa).

Residues Met1–Ala18 form the signal peptide. The propeptide occupies Gln19–Leu24. The region spanning Ile25–Ala249 is the Peptidase S1 domain. 6 disulfide bridges follow: Cys31–Cys163, Cys50–Cys66, Cys98–Cys256, Cys142–Cys210, Cys174–Cys189, and Cys200–Cys225. N-linked (GlcNAc...) asparagine glycosylation occurs at Asn44. Catalysis depends on charge relay system residues His65 and Asp110. Ser204 (charge relay system) is an active-site residue. An N-linked (GlcNAc...) asparagine glycan is attached at Asn239.

Belongs to the peptidase S1 family. Snake venom subfamily. Monomer. As to expression, expressed by the venom gland.

The protein localises to the secreted. Functionally, snake venom serine protease that may act in the hemostasis system of the prey. The polypeptide is Snake venom serine protease 3 (Protobothrops jerdonii (Jerdon's pitviper)).